Consider the following 276-residue polypeptide: 3-methyl-2-oxobutanoate hydroxymethyltransferase (276 aa).

Residues Asp45 and Asp84 each contribute to the Mg(2+) site. Residues 45–46 (DS), Asp84, and Lys114 each bind 3-methyl-2-oxobutanoate. Glu116 contacts Mg(2+). Glu183 (proton acceptor) is an active-site residue.

Belongs to the PanB family. In terms of assembly, homodecamer; pentamer of dimers. Mg(2+) is required as a cofactor.

Its subcellular location is the cytoplasm. The enzyme catalyses 3-methyl-2-oxobutanoate + (6R)-5,10-methylene-5,6,7,8-tetrahydrofolate + H2O = 2-dehydropantoate + (6S)-5,6,7,8-tetrahydrofolate. Its pathway is cofactor biosynthesis; (R)-pantothenate biosynthesis; (R)-pantoate from 3-methyl-2-oxobutanoate: step 1/2. In terms of biological role, catalyzes the reversible reaction in which hydroxymethyl group from 5,10-methylenetetrahydrofolate is transferred onto alpha-ketoisovalerate to form ketopantoate. The sequence is that of 3-methyl-2-oxobutanoate hydroxymethyltransferase from Syntrophomonas wolfei subsp. wolfei (strain DSM 2245B / Goettingen).